The primary structure comprises 310 residues: Probable GTP 3',8-cyclase (310 aa).

One can recognise a Radical SAM core domain in the interval 5–232; it reads RFGRPVTNLR…RRRKYFIPID (228 aa). A GTP-binding site is contributed by Arg-14. Residues Cys-21 and Cys-25 each coordinate [4Fe-4S] cluster. Tyr-27 provides a ligand contact to S-adenosyl-L-methionine. Cys-28 serves as a coordination point for [4Fe-4S] cluster. Lys-61 is a binding site for GTP. Position 65 (Gly-65) interacts with S-adenosyl-L-methionine. Residue Thr-90 coordinates GTP. Ser-114 contacts S-adenosyl-L-methionine. Lys-150 lines the GTP pocket. S-adenosyl-L-methionine is bound at residue Met-189. [4Fe-4S] cluster contacts are provided by Cys-250 and Cys-253. Position 255-257 (255-257) interacts with GTP; it reads RLR. Cys-267 is a [4Fe-4S] cluster binding site.

Belongs to the radical SAM superfamily. MoaA family. Requires [4Fe-4S] cluster as cofactor.

The catalysed reaction is GTP + AH2 + S-adenosyl-L-methionine = (8S)-3',8-cyclo-7,8-dihydroguanosine 5'-triphosphate + 5'-deoxyadenosine + L-methionine + A + H(+). It functions in the pathway cofactor biosynthesis; molybdopterin biosynthesis. Functionally, catalyzes the cyclization of GTP to (8S)-3',8-cyclo-7,8-dihydroguanosine 5'-triphosphate. The protein is Probable GTP 3',8-cyclase of Pyrococcus horikoshii (strain ATCC 700860 / DSM 12428 / JCM 9974 / NBRC 100139 / OT-3).